The chain runs to 576 residues: Keratin, type II cytoskeletal 5 (576 aa).

The segment at 1–163 is head; it reads MSRQSSVSFR…DPTIQRVRTE (163 aa). Residues S5, S8, S16, and S21 each carry the phosphoserine modification. Position 24 is a phosphothreonine; by CDK1 (T24). 8 positions are modified to phosphoserine: S26, S36, S46, S60, S67, S71, S74, and S78. Position 147 is a phosphothreonine; by CDK1 (T147). T162 carries the post-translational modification Phosphothreonine; by AURKB. The segment at 164-199 is coil 1A; the sequence is EREQIKTLNNKFASFIDKVRFLEQQNKVLDTKWTLL. Residues 164–477 enclose the IF rod domain; it reads EREQIKTLNN…KLLEGEECRL (314 aa). The segment at 200-218 is linker 1; sequence QEQGTKTIKQNLDPLFEQY. The interval 219–311 is coil 1B; sequence INNLRRQLDG…FFDAELSQMQ (93 aa). Residues 312–334 form a linker 12 region; that stretch reads THVSDTSVVLSMDNNRSLDLDSI. Residues 335–473 form a coil 2 region; that stretch reads IAEVKAQYED…ATYRKLLEGE (139 aa). Positions 474–576 are tail; that stretch reads ECRLSGEGVG…TSSSRRSFKS (103 aa). The residue at position 527 (R527) is an Omega-N-methylarginine. Positions 540-557 are enriched in gly residues; the sequence is GFSASSGQGGGFSSGGGS. The disordered stretch occupies residues 540 to 576; it reads GFSASSGQGGGFSSGGGSSSSVKFVSTTSSSRRSFKS. Low complexity predominate over residues 558-576; it reads SSSVKFVSTTSSSRRSFKS.

Belongs to the intermediate filament family. As to quaternary structure, heterodimer of a type I and a type II keratin. Heterodimer with type I keratin KRT25 leading to the formation of keratin intermediate filament (KIF) network. Forms a heterodimer (via 2B domains) with KRT14 (via 2B domains). Interacts with TCHP. Interacts with EPPK1. Interacts with AMELX. Interacts with PKP1 (via N-terminus) and PKP2. In terms of processing, phosphorylated by CDK1, AURKB and Rho-kinase, phosphorylation is regulated by the cell cycle. Thr-24 phosphorylation, mediated by CDK1, peaks during prometaphase or metaphase cells with phosphorylated filamentous structures evident throughout the cytoplasm during early mitosis. CDK1 phosphorylates Thr-24 in mitotic cells at the site of injury. O-glycosylated. In terms of tissue distribution, expressed in the epidermis (at protein level) and testis (within pachytene spermatocytes).

It localises to the cytoplasm. Its function is as follows. Required for the formation of keratin intermediate filaments in the basal epidermis and maintenance of the skin barrier in response to mechanical stress. Regulates the recruitment of Langerhans cells to the epidermis, potentially by modulation of the abundance of macrophage chemotactic cytokines, macrophage inflammatory cytokines and CTNND1 localization in keratinocytes. The sequence is that of Keratin, type II cytoskeletal 5 from Rattus norvegicus (Rat).